The sequence spans 198 residues: Succinate dehydrogenase [ubiquinone] cytochrome b subunit, mitochondrial (198 aa).

The transit peptide at methionine 1–lysine 50 directs the protein to the mitochondrion. At asparagine 51–serine 99 the chain is on the mitochondrial matrix side. Residues serine 93 and arginine 97 each contribute to the a ubiquinone site. A helical transmembrane segment spans residues leucine 100–leucine 120. Topologically, residues glycine 121 to lysine 139 are mitochondrial intermembrane. The helical transmembrane segment at isoleucine 140–alanine 160 threads the bilayer. Position 156 (histidine 156) interacts with heme. Topologically, residues isoleucine 161–lysine 175 are mitochondrial matrix. Residues glycine 176–leucine 196 traverse the membrane as a helical segment. Over threonine 197–leucine 198 the chain is Mitochondrial intermembrane.

It belongs to the cytochrome b560 family. In terms of assembly, forms part of complex II containing four subunits: a flavoprotein (FP), an iron-sulfur protein (IP) and a cytochrome b composed of two integral membrane proteins. Heme is required as a cofactor.

The protein resides in the mitochondrion inner membrane. Its pathway is carbohydrate metabolism; tricarboxylic acid cycle. Membrane-anchoring mono-heme cytochrome b subunit of succinate dehydrogenase (SDH) that is involved in system II of the mitochondrial electron transport chain and is responsible for transferring electrons from succinate to ubiquinone (coenzyme Q). SDH3 and SDH4 form the membrane dimer that anchors the catalytic dimer formed by SDH1 and SDH2 to the matrix surface of the mitochondrial inner membrane. Electrons originating from the catalytic dimer enter the membrane dimer for ubiquinone reduction. This is Succinate dehydrogenase [ubiquinone] cytochrome b subunit, mitochondrial (SDH3) from Saccharomyces cerevisiae (strain ATCC 204508 / S288c) (Baker's yeast).